The following is a 198-amino-acid chain: Holliday junction branch migration complex subunit RuvA (198 aa).

The interval 1–63 (MIAYLSGAVR…EDAQLLFGFL (63 aa)) is domain I. The interval 64–142 (DTDSLRLFDL…EHLAAGAPVS (79 aa)) is domain II. Positions 143-150 (AGKAALTS) are flexible linker. A domain III region spans residues 150 to 198 (STAGRDAIEALLALGFREPQVRSVVAELLAADPEQSADALIRKGLGKLR).

It belongs to the RuvA family. As to quaternary structure, homotetramer. Forms an RuvA(8)-RuvB(12)-Holliday junction (HJ) complex. HJ DNA is sandwiched between 2 RuvA tetramers; dsDNA enters through RuvA and exits via RuvB. An RuvB hexamer assembles on each DNA strand where it exits the tetramer. Each RuvB hexamer is contacted by two RuvA subunits (via domain III) on 2 adjacent RuvB subunits; this complex drives branch migration. In the full resolvosome a probable DNA-RuvA(4)-RuvB(12)-RuvC(2) complex forms which resolves the HJ.

The protein localises to the cytoplasm. Its function is as follows. The RuvA-RuvB-RuvC complex processes Holliday junction (HJ) DNA during genetic recombination and DNA repair, while the RuvA-RuvB complex plays an important role in the rescue of blocked DNA replication forks via replication fork reversal (RFR). RuvA specifically binds to HJ cruciform DNA, conferring on it an open structure. The RuvB hexamer acts as an ATP-dependent pump, pulling dsDNA into and through the RuvAB complex. HJ branch migration allows RuvC to scan DNA until it finds its consensus sequence, where it cleaves and resolves the cruciform DNA. This chain is Holliday junction branch migration complex subunit RuvA, found in Deinococcus geothermalis (strain DSM 11300 / CIP 105573 / AG-3a).